Consider the following 184-residue polypeptide: MKAKKYENQIYNENGRRCQRHGRRLAIADANGLNTVNAGDGKNLGTATATITTLQSCSVDLNLVTPNATVNRAGMLANREITKFSVGSKDCPSDTYAVWFKEIDGEGQGVAQGTTVTNKFYLKMTSADGTASVGDINIGTKSGKGLSGQLVGGKFDGKITVAYDSATAPADVYTYDLMAAVYVQ.

An N-terminal signal peptide occupies residues 1–28 (MKAKKYENQIYNENGRRCQRHGRRLAIA). Cysteine 57 and cysteine 91 are disulfide-bonded.

Forms a polymeric structure, which disintegrates with elevated temperature into a monomer but with some relatively stable dimers.

This is Non-fimbrial adhesin 1 (nfaA) from Escherichia coli.